The chain runs to 414 residues: Glutamyl-tRNA reductase (414 aa).

Substrate-binding positions include 49-52, serine 108, 113-115, and glutamine 119; these read TCNR and EPQ. Cysteine 50 functions as the Nucleophile in the catalytic mechanism. Residue 188-193 coordinates NADP(+); it reads GAGQTG.

Belongs to the glutamyl-tRNA reductase family. In terms of assembly, homodimer.

The catalysed reaction is (S)-4-amino-5-oxopentanoate + tRNA(Glu) + NADP(+) = L-glutamyl-tRNA(Glu) + NADPH + H(+). The protein operates within porphyrin-containing compound metabolism; protoporphyrin-IX biosynthesis; 5-aminolevulinate from L-glutamyl-tRNA(Glu): step 1/2. In terms of biological role, catalyzes the NADPH-dependent reduction of glutamyl-tRNA(Glu) to glutamate 1-semialdehyde (GSA). This Francisella tularensis subsp. tularensis (strain WY96-3418) protein is Glutamyl-tRNA reductase.